The following is a 200-amino-acid chain: Pyridoxal 5'-phosphate synthase subunit PdxT (200 aa).

46-48 (GES) serves as a coordination point for L-glutamine. The Nucleophile role is filled by Cys78. Residues Arg107 and 138-139 (IR) each bind L-glutamine. Active-site charge relay system residues include His175 and Glu177.

It belongs to the glutaminase PdxT/SNO family. In terms of assembly, in the presence of PdxS, forms a dodecamer of heterodimers. Only shows activity in the heterodimer.

The catalysed reaction is aldehydo-D-ribose 5-phosphate + D-glyceraldehyde 3-phosphate + L-glutamine = pyridoxal 5'-phosphate + L-glutamate + phosphate + 3 H2O + H(+). It carries out the reaction L-glutamine + H2O = L-glutamate + NH4(+). It functions in the pathway cofactor biosynthesis; pyridoxal 5'-phosphate biosynthesis. Functionally, catalyzes the hydrolysis of glutamine to glutamate and ammonia as part of the biosynthesis of pyridoxal 5'-phosphate. The resulting ammonia molecule is channeled to the active site of PdxS. The chain is Pyridoxal 5'-phosphate synthase subunit PdxT from Corynebacterium glutamicum (strain ATCC 13032 / DSM 20300 / JCM 1318 / BCRC 11384 / CCUG 27702 / LMG 3730 / NBRC 12168 / NCIMB 10025 / NRRL B-2784 / 534).